Here is a 121-residue protein sequence, read N- to C-terminus: ATP synthase epsilon chain (121 aa).

It belongs to the ATPase epsilon chain family. F-type ATPases have 2 components, CF(1) - the catalytic core - and CF(0) - the membrane proton channel. CF(1) has five subunits: alpha(3), beta(3), gamma(1), delta(1), epsilon(1). CF(0) has three main subunits: a, b and c.

It is found in the cell membrane. In terms of biological role, produces ATP from ADP in the presence of a proton gradient across the membrane. The sequence is that of ATP synthase epsilon chain from Mycobacterium sp. (strain JLS).